The chain runs to 190 residues: ATP synthase subunit delta (190 aa).

This sequence belongs to the ATPase delta chain family. In terms of assembly, F-type ATPases have 2 components, F(1) - the catalytic core - and F(0) - the membrane proton channel. F(1) has five subunits: alpha(3), beta(3), gamma(1), delta(1), epsilon(1). F(0) has three main subunits: a(1), b(2) and c(10-14). The alpha and beta chains form an alternating ring which encloses part of the gamma chain. F(1) is attached to F(0) by a central stalk formed by the gamma and epsilon chains, while a peripheral stalk is formed by the delta and b chains.

The protein localises to the cell inner membrane. F(1)F(0) ATP synthase produces ATP from ADP in the presence of a proton or sodium gradient. F-type ATPases consist of two structural domains, F(1) containing the extramembraneous catalytic core and F(0) containing the membrane proton channel, linked together by a central stalk and a peripheral stalk. During catalysis, ATP synthesis in the catalytic domain of F(1) is coupled via a rotary mechanism of the central stalk subunits to proton translocation. In terms of biological role, this protein is part of the stalk that links CF(0) to CF(1). It either transmits conformational changes from CF(0) to CF(1) or is implicated in proton conduction. This chain is ATP synthase subunit delta, found in Salinibacter ruber (strain DSM 13855 / M31).